A 76-amino-acid chain; its full sequence is DNA-directed RNA polymerase subunit omega (76 aa).

The protein belongs to the RNA polymerase subunit omega family. In terms of assembly, in cyanobacteria the RNAP catalytic core is composed of 2 alpha, 1 beta, 1 beta', 1 gamma and 1 omega subunit. When a sigma factor is associated with the core the holoenzyme is formed, which can initiate transcription.

The catalysed reaction is RNA(n) + a ribonucleoside 5'-triphosphate = RNA(n+1) + diphosphate. In terms of biological role, promotes RNA polymerase assembly. Latches the N- and C-terminal regions of the beta' subunit thereby facilitating its interaction with the beta and alpha subunits. The sequence is that of DNA-directed RNA polymerase subunit omega from Acaryochloris marina (strain MBIC 11017).